We begin with the raw amino-acid sequence, 213 residues long: MQISDRLSSSTAPILNLPVRRASVKRKTGETDVTVNLNLDGVGNCQANTGIPFLDHMLHQISSHGLIDLDVQAVGDIEIDDHHTNEDVGITLGQALKQALGDRKGIVRFGHFLAPLDEALVEVALDFSGRPHLSYGLEMPTQRVGNYDTQLVREFFVALANNSLMTLHIRQLGGINSHHIIEAGFKAFARSLRMATEIDPRRVGEIPSSKGVL.

This sequence belongs to the imidazoleglycerol-phosphate dehydratase family.

The protein resides in the cytoplasm. It catalyses the reaction D-erythro-1-(imidazol-4-yl)glycerol 3-phosphate = 3-(imidazol-4-yl)-2-oxopropyl phosphate + H2O. The protein operates within amino-acid biosynthesis; L-histidine biosynthesis; L-histidine from 5-phospho-alpha-D-ribose 1-diphosphate: step 6/9. The sequence is that of Imidazoleglycerol-phosphate dehydratase from Trichodesmium erythraeum (strain IMS101).